The primary structure comprises 699 residues: Elongation factor G 1 (699 aa).

Positions glutamate 8 to threonine 290 constitute a tr-type G domain. Residues alanine 17 to threonine 24, aspartate 88 to histidine 92, and asparagine 142 to aspartate 145 each bind GTP.

The protein belongs to the TRAFAC class translation factor GTPase superfamily. Classic translation factor GTPase family. EF-G/EF-2 subfamily.

The protein localises to the cytoplasm. Catalyzes the GTP-dependent ribosomal translocation step during translation elongation. During this step, the ribosome changes from the pre-translocational (PRE) to the post-translocational (POST) state as the newly formed A-site-bound peptidyl-tRNA and P-site-bound deacylated tRNA move to the P and E sites, respectively. Catalyzes the coordinated movement of the two tRNA molecules, the mRNA and conformational changes in the ribosome. The chain is Elongation factor G 1 from Hahella chejuensis (strain KCTC 2396).